Reading from the N-terminus, the 1285-residue chain is Ataxin-2 (1285 aa).

3 disordered regions span residues 1 to 85 (MRSS…PGSR), 111 to 178 (ARAC…SPGA), and 197 to 224 (PVAS…GLPQ). The segment covering 29 to 38 (SLPRTARRGG) has biased composition (basic residues). Residues 48 to 65 (AGPPPRGPGAPPRGPRSP) show a composition bias toward pro residues. Residues 128-144 (SSSARPAPGCPRPACEP) show a composition bias toward low complexity. Gly residues predominate over residues 205 to 214 (AGGGRPGLGR). 2 positions are modified to phosphoserine: Ser218 and Ser219. The Sm domain maps to 237 to 314 (RMVHILTSVV…FVVVQFKDTD (78 aa)). Phosphoserine is present on residues Ser362 and Ser435. Basic and acidic residues-rich tracts occupy residues 428–440 (ALEN…EEKY) and 447–461 (CSDR…RDNK). 2 disordered regions span residues 428 to 925 (ALEN…HQQP) and 1111 to 1191 (AALH…QSSF). The residue at position 477 (Ser477) is a Phosphoserine. Positions 498–510 (ASHTSDFNPNAGS) are enriched in polar residues. Ser523 carries the post-translational modification Phosphoserine. Positions 526 to 552 (PSHSSRPPSRYQSGPNSLPPRAATHTR) are enriched in low complexity. A compositionally biased stretch (pro residues) spans 554–567 (PSRPPSRPSRPPSH). At Ser593 the chain carries Phosphoserine. A compositionally biased stretch (basic residues) spans 596–606 (AQRHPRNHRVS). Arg609 is modified (asymmetric dimethylarginine; alternate). The residue at position 609 (Arg609) is an Omega-N-methylarginine; alternate. Residues Ser611 and Ser653 each carry the phosphoserine modification. Residues 662–672 (PRQSSIGNSPS) show a composition bias toward polar residues. Low complexity predominate over residues 685 to 694 (PAEAVSMPVP). Ser697 is modified (phosphoserine). At Thr710 the chain carries Phosphothreonine. A compositionally biased stretch (polar residues) spans 737–746 (ASETSPSFSK). Ser741 and Ser753 each carry phosphoserine. The segment covering 757 to 773 (SEHRKQIDDLKKFKNDF) has biased composition (basic and acidic residues). Over residues 776-789 (QPSSTSESMDQLLS) the composition is skewed to polar residues. Basic and acidic residues predominate over residues 790–813 (KNREGEKSRDLIKDKTEASAKDSF). Residues 814 to 838 (IDSSSSSSNCTSGSSKTNSPSISPS) are compositionally biased toward low complexity. Phosphoserine is present on residues Ser827, Ser828, Ser832, Ser836, Ser838, Ser859, and Ser860. The segment covering 851–862 (VTSQGVQTSSPA) has biased composition (polar residues). A Glycyl lysine isopeptide (Lys-Gly) (interchain with G-Cter in SUMO2) cross-link involves residue Lys864. The segment covering 864–881 (KQEKDDREEKKDTTEQVR) has biased composition (basic and acidic residues). 2 stretches are compositionally biased toward low complexity: residues 896 to 907 (SFSQPKPSTTPT) and 1128 to 1165 (GQQQ…QQSA).

It belongs to the ataxin-2 family. As to quaternary structure, interacts with RBFOX1. Monomer. Can also form homodimers. Interacts with polyribosomes. Interacts with EGFR. Interacts with SH3GL3. Interacts with SH3GL2, SH3KBP1 and CBL. Interacts with ATXN2L. Expressed in the heart, lung, liver, kidney, skeletal muscle, spleen and intestine. Predominant expression was seen in the brain where a high level expression was found in the pyramidal cortical neurons, large brain stem neurons and cerebellar Purkinje cells. All three isoforms were found in all the tissues except skeletal muscle where only isoform 1 was found.

It localises to the cytoplasm. Functionally, involved in EGFR trafficking, acting as negative regulator of endocytic EGFR internalization at the plasma membrane. In Mus musculus (Mouse), this protein is Ataxin-2 (Atxn2).